Here is an 895-residue protein sequence, read N- to C-terminus: Protein translocase subunit SecA (895 aa).

Residues Gln89, Gly107–Thr111, and Asp502 each bind ATP. Disordered regions lie at residues Arg560–Thr579 and Ala848–Gly884. The Zn(2+) site is built by Cys879, Cys881, Cys890, and His891.

This sequence belongs to the SecA family. As to quaternary structure, monomer and homodimer. Part of the essential Sec protein translocation apparatus which comprises SecA, SecYEG and auxiliary proteins SecDF-YajC and YidC. Zn(2+) serves as cofactor.

Its subcellular location is the cell inner membrane. It is found in the cytoplasm. The enzyme catalyses ATP + H2O + cellular proteinSide 1 = ADP + phosphate + cellular proteinSide 2.. Its function is as follows. Part of the Sec protein translocase complex. Interacts with the SecYEG preprotein conducting channel. Has a central role in coupling the hydrolysis of ATP to the transfer of proteins into and across the cell membrane, serving both as a receptor for the preprotein-SecB complex and as an ATP-driven molecular motor driving the stepwise translocation of polypeptide chains across the membrane. The sequence is that of Protein translocase subunit SecA from Ruegeria sp. (strain TM1040) (Silicibacter sp.).